Reading from the N-terminus, the 701-residue chain is DNA ligase (701 aa).

NAD(+) contacts are provided by residues 43 to 47, 92 to 93, and Glu126; these read DADYD and SL. Lys128 (N6-AMP-lysine intermediate) is an active-site residue. Residues Arg149, Glu186, Lys302, and Lys326 each coordinate NAD(+). Positions 417, 420, 440, and 446 each coordinate Zn(2+). A BRCT domain is found at 622–701; the sequence is ETGSPVTGKT…DEWLALIGET (80 aa).

The protein belongs to the NAD-dependent DNA ligase family. LigA subfamily. Requires Mg(2+) as cofactor. Mn(2+) serves as cofactor.

The catalysed reaction is NAD(+) + (deoxyribonucleotide)n-3'-hydroxyl + 5'-phospho-(deoxyribonucleotide)m = (deoxyribonucleotide)n+m + AMP + beta-nicotinamide D-nucleotide.. Its function is as follows. DNA ligase that catalyzes the formation of phosphodiester linkages between 5'-phosphoryl and 3'-hydroxyl groups in double-stranded DNA using NAD as a coenzyme and as the energy source for the reaction. It is essential for DNA replication and repair of damaged DNA. This Hyphomonas neptunium (strain ATCC 15444) protein is DNA ligase.